The chain runs to 635 residues: Threonine--tRNA ligase (635 aa).

The TGS domain maps to 1–61 (MITVRLPDGS…EKDSDLAIIT (61 aa)). The segment at 242–533 (DHRKLGKQLD…LIEHYAGALP (292 aa)) is catalytic. 3 residues coordinate Zn(2+): cysteine 333, histidine 384, and histidine 510.

Belongs to the class-II aminoacyl-tRNA synthetase family. Homodimer. Zn(2+) serves as cofactor.

It localises to the cytoplasm. It carries out the reaction tRNA(Thr) + L-threonine + ATP = L-threonyl-tRNA(Thr) + AMP + diphosphate + H(+). Catalyzes the attachment of threonine to tRNA(Thr) in a two-step reaction: L-threonine is first activated by ATP to form Thr-AMP and then transferred to the acceptor end of tRNA(Thr). Also edits incorrectly charged L-seryl-tRNA(Thr). This Janthinobacterium sp. (strain Marseille) (Minibacterium massiliensis) protein is Threonine--tRNA ligase.